The sequence spans 308 residues: D-alanine--D-alanine ligase (308 aa).

The region spanning Lys-103 to Glu-302 is the ATP-grasp domain. Residue Met-130 to Thr-184 coordinates ATP. 3 residues coordinate Mg(2+): Asp-252, Glu-269, and Asn-271.

This sequence belongs to the D-alanine--D-alanine ligase family. Requires Mg(2+) as cofactor. The cofactor is Mn(2+).

Its subcellular location is the cytoplasm. The catalysed reaction is 2 D-alanine + ATP = D-alanyl-D-alanine + ADP + phosphate + H(+). It participates in cell wall biogenesis; peptidoglycan biosynthesis. Its function is as follows. Cell wall formation. This is D-alanine--D-alanine ligase from Parvibaculum lavamentivorans (strain DS-1 / DSM 13023 / NCIMB 13966).